A 1344-amino-acid polypeptide reads, in one-letter code: Protein stu1 (1344 aa).

An HEAT 1 repeat occupies 93–131 (LYPLLVERLGDHKERIRAQAAQSFTDMWLAAPEEVEQCV). The tract at residues 265–292 (HRPVSRAETQASRSVSRLDTHQRPASRM) is disordered. The stretch at 508 to 544 (VTFTTRILQHVSGACQDKNVQLRLFAAGWLKTLIQKQ) is one HEAT 2 repeat. Disordered regions lie at residues 606 to 637 (RSLL…ANGT), 651 to 847 (AAQK…STPR), 914 to 945 (LTEN…ESVP), 984 to 1004 (PVTH…LSSS), and 1031 to 1054 (SLPH…PSQR). Composition is skewed to polar residues over residues 691 to 705 (VRTV…SLSS) and 735 to 747 (ATDS…NQID). The segment covering 748 to 769 (GSPSAAKSKSSTPSLKSVSSTG) has biased composition (low complexity). 2 stretches are compositionally biased toward polar residues: residues 828 to 847 (FSVT…STPR) and 914 to 942 (LTEN…NQDE). Residues 995–1004 (SSKPSGLSSS) are compositionally biased toward low complexity.

The protein belongs to the CLASP family. As to quaternary structure, interacts with microtubules.

The protein localises to the cytoplasm. The protein resides in the cytoskeleton. Its subcellular location is the nucleus. It is found in the spindle. In terms of biological role, microtubule binding protein that promotes the stabilization of dynamic microtubules. Required for mitotic spindle formation. The polypeptide is Protein stu1 (stu1) (Aspergillus fumigatus (strain ATCC MYA-4609 / CBS 101355 / FGSC A1100 / Af293) (Neosartorya fumigata)).